Consider the following 489-residue polypeptide: Adenosylhomocysteinase (489 aa).

Residues threonine 68, aspartate 151, and glutamate 213 each contribute to the substrate site. NAD(+) is bound at residue 214-216 (TTT). 2 residues coordinate substrate: lysine 243 and aspartate 247. NAD(+) contacts are provided by residues asparagine 248, 277 to 282 (GYGDVG), glutamate 300, asparagine 335, 356 to 358 (IGH), and asparagine 403.

It belongs to the adenosylhomocysteinase family. It depends on NAD(+) as a cofactor.

It is found in the cytoplasm. It catalyses the reaction S-adenosyl-L-homocysteine + H2O = L-homocysteine + adenosine. It functions in the pathway amino-acid biosynthesis; L-homocysteine biosynthesis; L-homocysteine from S-adenosyl-L-homocysteine: step 1/1. In terms of biological role, may play a key role in the regulation of the intracellular concentration of adenosylhomocysteine. The chain is Adenosylhomocysteinase from Mycobacterium sp. (strain KMS).